The following is a 286-amino-acid chain: Shikimate dehydrogenase (NADP(+)) (286 aa).

Residues Ser-22–Ser-24 and Thr-71 contribute to the shikimate site. Residue Lys-75 is the Proton acceptor of the active site. Glu-87 serves as a coordination point for NADP(+). 2 residues coordinate shikimate: Asn-96 and Asp-111. NADP(+) is bound by residues Gly-136 to Ala-140, Asn-160 to Arg-165, and Ile-225. Tyr-227 lines the shikimate pocket. Residue Gly-248 participates in NADP(+) binding.

Belongs to the shikimate dehydrogenase family. In terms of assembly, homodimer.

The catalysed reaction is shikimate + NADP(+) = 3-dehydroshikimate + NADPH + H(+). It functions in the pathway metabolic intermediate biosynthesis; chorismate biosynthesis; chorismate from D-erythrose 4-phosphate and phosphoenolpyruvate: step 4/7. Functionally, involved in the biosynthesis of the chorismate, which leads to the biosynthesis of aromatic amino acids. Catalyzes the reversible NADPH linked reduction of 3-dehydroshikimate (DHSA) to yield shikimate (SA). The sequence is that of Shikimate dehydrogenase (NADP(+)) from Rhizobium meliloti (strain 1021) (Ensifer meliloti).